The sequence spans 1224 residues: Coatomer subunit alpha (1224 aa).

WD repeat units lie at residues 7 to 37, 49 to 79, 91 to 121, and 133 to 163; these read TKSA…QLWD, EHDG…KVWN, GHLD…RVWN, and GHNH…RVWD. Position 173 is a phosphoserine (Ser173). Residue Thr185 is modified to Phosphothreonine. WD repeat units follow at residues 203-233 and 247-277; these read GHDR…KIWR and GHYN…RVWD. A Phosphothreonine modification is found at Thr591. Arg965 is modified (omega-N-methylarginine). Ser1193 carries the phosphoserine modification.

As to quaternary structure, oligomeric complex that consists of at least the alpha, beta, beta', gamma, delta, epsilon and zeta subunits. Interacts with SCYL1. Interacts with JAGN1. Interacts with TMEM41B. Interacts with SVEP1. Probably interacts with PEX11A.

It is found in the cytoplasm. Its subcellular location is the golgi apparatus membrane. The protein localises to the cytoplasmic vesicle. It localises to the COPI-coated vesicle membrane. The protein resides in the secreted. Its function is as follows. The coatomer is a cytosolic protein complex that binds to dilysine motifs and reversibly associates with Golgi non-clathrin-coated vesicles, which further mediate biosynthetic protein transport from the ER, via the Golgi up to the trans Golgi network. Coatomer complex is required for budding from Golgi membranes, and is essential for the retrograde Golgi-to-ER transport of dilysine-tagged proteins. In mammals, the coatomer can only be recruited by membranes associated to ADP-ribosylation factors (ARFs), which are small GTP-binding proteins; the complex also influences the Golgi structural integrity, as well as the processing, activity, and endocytic recycling of LDL receptors. In terms of biological role, xenin stimulates exocrine pancreatic secretion. It inhibits pentagastrin-stimulated secretion of acid, to induce exocrine pancreatic secretion and to affect small and large intestinal motility. In the gut, xenin interacts with the neurotensin receptor. The protein is Coatomer subunit alpha (COPA) of Bos taurus (Bovine).